The primary structure comprises 1323 residues: Glutamate receptor ionotropic, NMDA 2D (1323 aa).

The signal sequence occupies residues 1–27 (MRGAGGPRGPRGPAKMLLLLALACASP). Over 28-579 (FPEEVPGPGA…SPSAFLEPYS (552 aa)) the chain is Extracellular. A glycan (N-linked (GlcNAc...) asparagine) is linked at Asn-89. Residues Cys-101 and Cys-345 are joined by a disulfide bond. 4 N-linked (GlcNAc...) asparagine glycosylation sites follow: Asn-349, Asn-363, Asn-381, and Asn-464. Intrachain disulfides connect Cys-452–Cys-480 and Cys-459–Cys-481. L-glutamate is bound by residues Ser-536, Thr-538, and Arg-543. Asn-566 carries N-linked (GlcNAc...) asparagine glycosylation. The chain crosses the membrane as a helical span at residues 580-601 (PAVWVMMFVMCLTVVAVTVFIF). Residues 602–626 (EYLSPVGYNRSLATGKRPGGSTFTI) lie on the Cytoplasmic side of the membrane. The segment at residues 627–638 (GKSIWLLWALVF) is an intramembrane region (discontinuously helical). The segment at 628 to 647 (KSIWLLWALVFNNSVPVENP) is pore-forming. Over 639–650 (NNSVPVENPRGT) the chain is Cytoplasmic. The chain crosses the membrane as a helical span at residues 651–671 (TSKIMVLVWAFFAVIFLASYT). Topologically, residues 672–840 (ANLAAFMIQE…EVMSSKLDID (169 aa)) are extracellular. An N-linked (GlcNAc...) asparagine glycan is attached at Asn-712. Ser-714, Thr-715, and Asp-756 together coordinate L-glutamate. Cys-770 and Cys-825 are oxidised to a cystine. The helical transmembrane segment at 841 to 864 (NMAGVFYMLLVAMGLSLLVFAWEH) threads the bilayer. The Cytoplasmic segment spans residues 865–1323 (LVYWRLRHCL…AHFSSLESEV (459 aa)). 3 disordered regions span residues 897 to 952 (EAAP…PGGA), 977 to 1112 (AAPR…SLGG), and 1201 to 1323 (PWAA…ESEV). Positions 899 to 929 (APPPAKPPPPPQPLPSPAYPAARPPPGPAPF) are enriched in pro residues. Residues 931-940 (PRERAAADRW) show a composition bias toward basic and acidic residues. Residues 977 to 986 (AAPRGAAGRP) show a composition bias toward low complexity. Residues 987–1001 (LSPPTTQPPQKPPPS) show a composition bias toward pro residues. Over residues 1030 to 1039 (AAAAAAVGPP) the composition is skewed to low complexity. Residues 1080–1092 (TAPPPRRAAPPPC) show a composition bias toward pro residues. Positions 1208-1228 (PRRRARCGCPRPHPHRPRASH) are enriched in basic residues. Arg-1303 is modified (omega-N-methylarginine). Ser-1313 carries the phosphoserine modification. The short motif at 1321–1323 (SEV) is the PDZ-binding element.

Belongs to the glutamate-gated ion channel (TC 1.A.10.1) family. NR2D/GRIN2D subfamily. Heterotetramer. Forms heterotetrameric channels composed of two GluN1/zeta subunits (GRIN1), and two identical GluN2/epsilon subunits (GRIN2A, GRIN2B, GRIN2C or GRIN2D) or GluN3 subunits (GRIN3A or GRIN3B) (in vitro). In vivo, the subunit composition may depend on the expression levels of the different subunits. Interacts with PDZ domains of PATJ and DLG4. As to expression, detected in neonate brain synaptosomes (at protein level).

The protein resides in the cell membrane. The protein localises to the postsynaptic cell membrane. It carries out the reaction Ca(2+)(in) = Ca(2+)(out). The enzyme catalyses Na(+)(in) = Na(+)(out). The catalysed reaction is K(+)(in) = K(+)(out). Functionally, component of N-methyl-D-aspartate (NMDA) receptors (NMDARs) that function as heterotetrameric, ligand-gated cation channels with high calcium permeability and voltage-dependent block by Mg(2+). Participates in synaptic plasticity for learning and memory formation. Channel activation requires binding of the neurotransmitter L-glutamate to the GluN2 subunit, glycine or D-serine binding to the GluN1 subunit, plus membrane depolarization to eliminate channel inhibition by Mg(2+). NMDARs mediate simultaneously the potasium efflux and the influx of calcium and sodium. Each GluN2 subunit confers differential attributes to channel properties, including activation, deactivation and desensitization kinetics, pH sensitivity, Ca2(+) permeability, and binding to allosteric modulators. The sequence is that of Glutamate receptor ionotropic, NMDA 2D from Mus musculus (Mouse).